The primary structure comprises 268 residues: Lipase (268 aa).

A signal peptide spans 1–34 (MRLSRRAATASALLLTPALALFGASAAVSAPRIQ). Ser44 acts as the Nucleophile in catalysis. Intrachain disulfides connect Cys61/Cys86, Cys127/Cys135, and Cys185/Cys232. His250 is an active-site residue.

Monomer.

The protein localises to the secreted. The enzyme catalyses a triacylglycerol + H2O = a diacylglycerol + a fatty acid + H(+). The catalysed reaction is hexadecanoyl-CoA + H2O = hexadecanoate + CoA + H(+). With respect to regulation, inhibited by 3,4-dichloroisocoumarin and tetrahydrolipstatin in the absence of substrate, but by phenylmethylsulfonyl fluoride (PMSF) only in the presence of substrate. Several water-miscible solvents enhance the lipase hydrolytic activity in vitro. Tetrahydrofuran and N,N-dimethylformamide (both 50%) inactivate the enzyme with t1/2 of 5 minutes and t1/2 of 2 hours, respectively. Functionally, catalyzes the hydrolysis of p-nitrophenyl esters, alpha- and beta-naphthyl esters, and triacylglycerols, with a preference for medium acyl chain length (C8-C12). Shows a much higher hydrolysis rate of glycerol esters of unsaturated C16 and C18 fatty acids than that of their saturated counterparts, and a preference for cis double bond. Is also able to hydrolyze several natural oils and Tween detergents. Also displays thioesterase and phospholipase activities, towards palmitoyl-coenzyme A and diheptanoyl glycerophosphocholine, respectively. Shows transesterification activity of racemic 1-phenyl ethanol with vinyl acetate in hexane, proceeding with partial (R)-enantioselectivity. This chain is Lipase, found in Streptomyces rimosus.